The sequence spans 159 residues: Putative transcriptional regulatory protein rrnAC0199 (159 aa).

It belongs to the Tfx family.

Putative transcriptional regulator. The chain is Putative transcriptional regulatory protein rrnAC0199 from Haloarcula marismortui (strain ATCC 43049 / DSM 3752 / JCM 8966 / VKM B-1809) (Halobacterium marismortui).